Reading from the N-terminus, the 1503-residue chain is DNA-directed RNA polymerase subunit beta' (1503 aa).

Residues Cys-60, Cys-62, Cys-75, and Cys-78 each coordinate Zn(2+). 3 residues coordinate Mg(2+): Asp-626, Asp-628, and Asp-630. 4 residues coordinate Zn(2+): Cys-1002, Cys-1075, Cys-1082, and Cys-1085. Residues 1439–1503 form a disordered region; that stretch reads EESQQAEEAP…EEEDNDLPAF (65 aa). Positions 1486 to 1503 are enriched in acidic residues; that stretch reads GDNDQSDAEEEDNDLPAF.

The protein belongs to the RNA polymerase beta' chain family. The RNAP catalytic core consists of 2 alpha, 1 beta, 1 beta' and 1 omega subunit. When a sigma factor is associated with the core the holoenzyme is formed, which can initiate transcription. It depends on Mg(2+) as a cofactor. Requires Zn(2+) as cofactor.

The enzyme catalyses RNA(n) + a ribonucleoside 5'-triphosphate = RNA(n+1) + diphosphate. DNA-dependent RNA polymerase catalyzes the transcription of DNA into RNA using the four ribonucleoside triphosphates as substrates. In Chloroflexus aurantiacus (strain ATCC 29364 / DSM 637 / Y-400-fl), this protein is DNA-directed RNA polymerase subunit beta'.